Consider the following 257-residue polypeptide: Protein IMPACT homolog (257 aa).

Positions 9-102 (AEIESLASIF…SLVQDFIRDL (94 aa)) constitute an RWD domain.

It belongs to the IMPACT family. Interacts with gcn-1; prevents the interaction of gcn-1 with gcn-2 and inhibits gcn-2 kinase activity. Interaction with rpl-39; this interaction occurs in a gcn-1-independent manner. Associates with ribosomes; this interaction occurs in a gcn-1-independent manner. Associates with actin; this interaction occurs in a gcn-1-independent manner.

The protein localises to the cytoplasm. Translational regulator that ensures constant high levels of translation under amino acid starvation. Plays a role as a negative regulator of the gcn-2 kinase activity; impairs gcn-1-mediated gcn-2 activation, and hence gcn-2-mediated eIF-2-alpha phosphorylation and subsequent down-regulation of protein synthesis in amino acid-starved cells. Plays a role in differentiation of neuronal cells by stimulating neurite outgrowth. The protein is Protein IMPACT homolog of Caenorhabditis elegans.